The sequence spans 804 residues: Protein-lysine N-methyltransferase SMYD4 (804 aa).

Arg112–Ala114 is a binding site for S-adenosyl-L-methionine. The SET domain maps to Ser233–Gly574. Zn(2+) is bound by residues Cys296, Cys299, Cys309, Cys312, Cys318, Cys322, His331, and Cys335. An MYND-type zinc finger spans residues Cys296–Cys335. S-adenosyl-L-methionine is bound by residues Asn427, Asn539–His540, Tyr573, and Phe595.

The protein belongs to the class V-like SAM-binding methyltransferase superfamily. In terms of assembly, interacts (via MYND-type zinc finger) with HDAC1.

The protein localises to the nucleus. Its subcellular location is the cytoplasm. The enzyme catalyses L-lysyl-[protein] + S-adenosyl-L-methionine = N(6)-methyl-L-lysyl-[protein] + S-adenosyl-L-homocysteine + H(+). Protein-lysine N-methyltransferase. Monomethylates PRMT5, modulating its transcriptional activity. May also act as a histone methyltransferase. Plays a critical role in cardiac development. Acts as a key epigenetic regulator of gene expression during cardiac development via its dual activities as a methyltransferase and negative regulator of HDAC1. The protein is Protein-lysine N-methyltransferase SMYD4 of Homo sapiens (Human).